The primary structure comprises 91 residues: MALLQQEKQQIIESYRLHDTDTGSAEVQVALLTSRINQLSQHLQRNPKDFNSRRGLLMMIGRRKRLLNYIAKHSPDRFRELAERLNIRVKK.

It belongs to the universal ribosomal protein uS15 family. Part of the 30S ribosomal subunit. Forms a bridge to the 50S subunit in the 70S ribosome, contacting the 23S rRNA.

Functionally, one of the primary rRNA binding proteins, it binds directly to 16S rRNA where it helps nucleate assembly of the platform of the 30S subunit by binding and bridging several RNA helices of the 16S rRNA. Forms an intersubunit bridge (bridge B4) with the 23S rRNA of the 50S subunit in the ribosome. The sequence is that of Small ribosomal subunit protein uS15 from Synechococcus sp. (strain JA-2-3B'a(2-13)) (Cyanobacteria bacterium Yellowstone B-Prime).